The chain runs to 161 residues: 2-C-methyl-D-erythritol 2,4-cyclodiphosphate synthase (161 aa).

Residues D14 and H16 each contribute to the a divalent metal cation site. Residues 14–16 (DVH) and 40–41 (HS) contribute to the 4-CDP-2-C-methyl-D-erythritol 2-phosphate site. H48 provides a ligand contact to a divalent metal cation. Residues 62–64 (DLG), F142, and R145 contribute to the 4-CDP-2-C-methyl-D-erythritol 2-phosphate site.

It belongs to the IspF family. As to quaternary structure, homotrimer. The cofactor is a divalent metal cation.

It catalyses the reaction 4-CDP-2-C-methyl-D-erythritol 2-phosphate = 2-C-methyl-D-erythritol 2,4-cyclic diphosphate + CMP. Its pathway is isoprenoid biosynthesis; isopentenyl diphosphate biosynthesis via DXP pathway; isopentenyl diphosphate from 1-deoxy-D-xylulose 5-phosphate: step 4/6. Involved in the biosynthesis of isopentenyl diphosphate (IPP) and dimethylallyl diphosphate (DMAPP), two major building blocks of isoprenoid compounds. Catalyzes the conversion of 4-diphosphocytidyl-2-C-methyl-D-erythritol 2-phosphate (CDP-ME2P) to 2-C-methyl-D-erythritol 2,4-cyclodiphosphate (ME-CPP) with a corresponding release of cytidine 5-monophosphate (CMP). In Acidothermus cellulolyticus (strain ATCC 43068 / DSM 8971 / 11B), this protein is 2-C-methyl-D-erythritol 2,4-cyclodiphosphate synthase.